A 175-amino-acid chain; its full sequence is Calcineurin subunit B (175 aa).

EF-hand domains follow at residues 21–56 (PELM…ANNP), 60–88 (RMIA…FSSK), 90–125 (GRDE…MVGN), and 131–166 (QLQQ…TDIV). Ca(2+) is bound by residues Asp34, Asp36, Ser38, Ser40, Glu45, Asp66, Asp68, Ser70, Thr72, Glu77, Asp103, Asp105, Asp107, Tyr109, Glu114, Asp144, Asp146, Asp148, Lys150, and Glu155.

The protein belongs to the calcineurin regulatory subunit family. In terms of assembly, composed of a catalytic subunit (A) and a regulatory subunit (B).

Regulatory subunit of calcineurin, a calcium-dependent, calmodulin stimulated protein phosphatase. Confers calcium sensitivity. Plays a central role in virulence and antifungal drug action. This is Calcineurin subunit B (CNB1) from Cryptococcus neoformans var. neoformans serotype D (strain B-3501A) (Filobasidiella neoformans).